Reading from the N-terminus, the 188-residue chain is MLQLHPSDIKDIVLNGGVIAYPTEAVYGLGCDPDNDTAIQKLLAVKQRPWQKGLILVASDFQQLLAYVDESQLTAEQLEFAFSKWPGPFTFVMPIKAQVSKYLCGEFDSIAVRVSAHAGVQALCRALNKPLVSTSANLAGEDPALTAAEILADFTGKIDALVLGELGEQRQPSTIIDARSGKILRNGQ.

In terms of domain architecture, YrdC-like spans 3–188 (QLHPSDIKDI…RSGKILRNGQ (186 aa)).

It belongs to the SUA5 family. TsaC subfamily.

The protein localises to the cytoplasm. It catalyses the reaction L-threonine + hydrogencarbonate + ATP = L-threonylcarbamoyladenylate + diphosphate + H2O. Required for the formation of a threonylcarbamoyl group on adenosine at position 37 (t(6)A37) in tRNAs that read codons beginning with adenine. Catalyzes the conversion of L-threonine, HCO(3)(-)/CO(2) and ATP to give threonylcarbamoyl-AMP (TC-AMP) as the acyladenylate intermediate, with the release of diphosphate. This chain is Threonylcarbamoyl-AMP synthase, found in Shewanella putrefaciens (strain CN-32 / ATCC BAA-453).